The following is a 309-amino-acid chain: Probable manganese-dependent inorganic pyrophosphatase (309 aa).

Histidine 9, aspartate 13, aspartate 15, aspartate 75, histidine 97, and aspartate 149 together coordinate Mn(2+).

The protein belongs to the PPase class C family. Mn(2+) serves as cofactor.

Its subcellular location is the cytoplasm. It carries out the reaction diphosphate + H2O = 2 phosphate + H(+). The polypeptide is Probable manganese-dependent inorganic pyrophosphatase (Bacillus anthracis (strain CDC 684 / NRRL 3495)).